The following is a 326-amino-acid chain: tRNA-modifying protein YgfZ (326 aa).

Residues W27 and W189 each coordinate folate.

This sequence belongs to the tRNA-modifying YgfZ family.

Its subcellular location is the cytoplasm. In terms of biological role, folate-binding protein involved in regulating the level of ATP-DnaA and in the modification of some tRNAs. It is probably a key factor in regulatory networks that act via tRNA modification, such as initiation of chromosomal replication. The polypeptide is tRNA-modifying protein YgfZ (Escherichia coli O17:K52:H18 (strain UMN026 / ExPEC)).